The sequence spans 405 residues: Serine-type anaerobic sulfatase-maturating enzyme (405 aa).

A Radical SAM core domain is found at 18 to 249; that stretch reads PRSPVPFHIL…QWRKRCDRGR (232 aa). [4Fe-4S] cluster is bound by residues Cys35 and Cys39. An S-adenosyl-L-methionine-binding site is contributed by Tyr41. Cys42 provides a ligand contact to [4Fe-4S] cluster. S-adenosyl-L-methionine contacts are provided by Gly84, Ser140, and Arg152. The [4Fe-4S] cluster site is built by Cys270, Cys276, and Cys291. Residue Asp292 is the Proton acceptor of the active site. 5 residues coordinate [4Fe-4S] cluster: Cys331, Cys334, Cys340, Cys344, and Cys357.

The protein belongs to the radical SAM superfamily. Anaerobic sulfatase-maturating enzyme family. As to quaternary structure, monomer. Interacts with AtsA prior to its export to the periplasm. Requires [4Fe-4S] cluster as cofactor.

The protein resides in the cytoplasm. It catalyses the reaction L-seryl-[sulfatase] + S-adenosyl-L-methionine = 3-oxo-L-alanyl-[sulfatase] + 5'-deoxyadenosine + L-methionine + H(+). It functions in the pathway protein modification; sulfatase oxidation. Its function is as follows. Involved in 'Ser-type' sulfatase maturation under anaerobic conditions. Catalyzes the post-translational modification of serine ('Ser-72' in the arylsulfatase AtsA) into 3-oxoalanine (also known as C(alpha)-formylglycine (FGly)), by a free radical chemical mechanism initiated via the reductive cleavage of S-adenosyl-L-methionine (SAM). The polypeptide is Serine-type anaerobic sulfatase-maturating enzyme (Klebsiella aerogenes (Enterobacter aerogenes)).